The sequence spans 335 residues: Dye-decolorizing peroxidase (335 aa).

D149 (proton acceptor) is an active-site residue. Residue H222 coordinates heme. Residues 312-335 form a targeting peptide region; that stretch reads LPQAATPTLAAGSLSIGSLKGSPR.

The protein belongs to the DyP-type peroxidase family. As to quaternary structure, homotetramer, presumably also in the encapsulin nanocompartment. Heme b serves as cofactor.

Its subcellular location is the encapsulin nanocompartment. The enzyme catalyses 2 a phenolic donor + H2O2 = 2 a phenolic radical donor + 2 H2O. In terms of biological role, cargo of a type 1 encapsulin nanocompartment in situ; this cargo protects against oxidative stress at low pH. When expressed in the cytoplasm (absence of the encapsulin shell gene) it is almost as protective as the intact nanocompartment; its encapsulation has a modest yet significant effect on protection against oxidative stress at low pH. A heme-dependent peroxidase, it probably does not have deferrochelatase activity. Converts guaiacol and H2O2 to tetraguaiacol, also acts on 2,2'-azino-bis(3-ethylbenzothiazoline-6-sulfonic acid) (ABTS). Retains peroxidase activity when encapsulated but has a reduced set of substrates; acts on ABTS but not guaiacol. The chain is Dye-decolorizing peroxidase from Mycobacterium tuberculosis (strain ATCC 25618 / H37Rv).